We begin with the raw amino-acid sequence, 225 residues long: Octanoyltransferase (225 aa).

In terms of domain architecture, BPL/LPL catalytic spans 42 to 219 (KNRQASMIFC…SICSALEYIN (178 aa)). Substrate is bound by residues 79–86 (RGGKITWH), 149–151 (AIG), and 162–164 (GFA). Cysteine 180 functions as the Acyl-thioester intermediate in the catalytic mechanism.

The protein belongs to the LipB family.

The protein localises to the cytoplasm. The enzyme catalyses octanoyl-[ACP] + L-lysyl-[protein] = N(6)-octanoyl-L-lysyl-[protein] + holo-[ACP] + H(+). It functions in the pathway protein modification; protein lipoylation via endogenous pathway; protein N(6)-(lipoyl)lysine from octanoyl-[acyl-carrier-protein]: step 1/2. Functionally, catalyzes the transfer of endogenously produced octanoic acid from octanoyl-acyl-carrier-protein onto the lipoyl domains of lipoate-dependent enzymes. Lipoyl-ACP can also act as a substrate although octanoyl-ACP is likely to be the physiological substrate. This is Octanoyltransferase from Tropheryma whipplei (strain TW08/27) (Whipple's bacillus).